The sequence spans 92 residues: Small ribosomal subunit protein uS19 (92 aa).

This sequence belongs to the universal ribosomal protein uS19 family.

Functionally, protein S19 forms a complex with S13 that binds strongly to the 16S ribosomal RNA. This Vibrio campbellii (strain ATCC BAA-1116) protein is Small ribosomal subunit protein uS19.